We begin with the raw amino-acid sequence, 611 residues long: Probable cysteine desulfurase 1 (611 aa).

The segment at 1–208 (MRATQLYAAS…HEMVDVFDIQ (208 aa)) is cargo-loading domain. Lys428 is subject to N6-(pyridoxal phosphate)lysine. The Cysteine persulfide intermediate role is filled by Cys566.

This sequence belongs to the class-V pyridoxal-phosphate-dependent aminotransferase family. Csd subfamily. There are 1-2 copies of this protein in each type 2A encapsulin shell. Requires pyridoxal 5'-phosphate as cofactor.

It is found in the encapsulin nanocompartment. The enzyme catalyses (sulfur carrier)-H + L-cysteine = (sulfur carrier)-SH + L-alanine. Cargo protein of a type 2A encapsulin nanocompartment involved in sulfur metabolism. Cysteine desulfurases mobilize the sulfur from L-cysteine to yield L-alanine, an essential step in sulfur metabolism for biosynthesis of a variety of sulfur-containing biomolecules. The sequence is that of Probable cysteine desulfurase 1 from Mycobacterium leprae (strain TN).